The sequence spans 472 residues: tRNA-2-methylthio-N(6)-dimethylallyladenosine synthase (472 aa).

The interval 1–24 is disordered; that stretch reads MTGTPDVFPPATPGGAPLVALPAG. Residues 33–150 enclose the MTTase N-terminal domain; the sequence is GKLYIKTHGC…LPELIRARRE (118 aa). [4Fe-4S] cluster is bound by residues Cys42, Cys79, Cys113, Cys187, Cys191, and Cys194. In terms of domain architecture, Radical SAM core spans 173–407; that stretch reads RAEGASAFVS…RINAHAAGIS (235 aa). One can recognise a TRAM domain in the interval 408–471; that stretch reads EKMVGTVQTV…TNSLRARVVA (64 aa).

It belongs to the methylthiotransferase family. MiaB subfamily. In terms of assembly, monomer. It depends on [4Fe-4S] cluster as a cofactor.

The protein resides in the cytoplasm. It catalyses the reaction N(6)-dimethylallyladenosine(37) in tRNA + (sulfur carrier)-SH + AH2 + 2 S-adenosyl-L-methionine = 2-methylsulfanyl-N(6)-dimethylallyladenosine(37) in tRNA + (sulfur carrier)-H + 5'-deoxyadenosine + L-methionine + A + S-adenosyl-L-homocysteine + 2 H(+). Functionally, catalyzes the methylthiolation of N6-(dimethylallyl)adenosine (i(6)A), leading to the formation of 2-methylthio-N6-(dimethylallyl)adenosine (ms(2)i(6)A) at position 37 in tRNAs that read codons beginning with uridine. This is tRNA-2-methylthio-N(6)-dimethylallyladenosine synthase from Stenotrophomonas maltophilia (strain K279a).